The chain runs to 595 residues: Flap endonuclease 1 (595 aa).

The segment at 1-106 is N-domain; sequence MGIKGLTKFI…SELEKRGEKR (106 aa). Position 34 (Asp34) interacts with Mg(2+). Positions 47 and 72 each coordinate DNA. Residues Asp88, Glu160, Glu162, Asp181, and Asp183 each coordinate Mg(2+). The tract at residues 124-267 is I-domain; it reads EIKKQSGRTV…KTAYNLIKEY (144 aa). Glu160 is a DNA binding site. The DNA site is built by Gly245 and Asp247. Residue Asp247 participates in Mg(2+) binding. The interaction with PCNA stretch occupies residues 350-358; the sequence is TQRRLDNFF. The tract at residues 370–493 is disordered; sequence NEESQIKKEV…TGDVYSFPNG (124 aa). A compositionally biased stretch (polar residues) spans 392-401; it reads NDSSTKLNSK. Residues 406–425 show a composition bias toward basic and acidic residues; that stretch reads PKGEKESKTEKDDGDTHNGN. Over residues 426–436 the composition is skewed to acidic residues; the sequence is DNEEEGGEGET. Basic and acidic residues predominate over residues 461 to 475; it reads HKSDSESGNVKKEST.

The protein belongs to the XPG/RAD2 endonuclease family. FEN1 subfamily. Interacts with PCNA. Three molecules of FEN1 bind to one PCNA trimer with each molecule binding to one PCNA monomer. PCNA stimulates the nuclease activity without altering cleavage specificity. Mg(2+) serves as cofactor. Phosphorylated. Phosphorylation upon DNA damage induces relocalization to the nuclear plasma.

It localises to the nucleus. It is found in the nucleolus. The protein localises to the nucleoplasm. Its subcellular location is the mitochondrion. Structure-specific nuclease with 5'-flap endonuclease and 5'-3' exonuclease activities involved in DNA replication and repair. During DNA replication, cleaves the 5'-overhanging flap structure that is generated by displacement synthesis when DNA polymerase encounters the 5'-end of a downstream Okazaki fragment. It enters the flap from the 5'-end and then tracks to cleave the flap base, leaving a nick for ligation. Also involved in the long patch base excision repair (LP-BER) pathway, by cleaving within the apurinic/apyrimidinic (AP) site-terminated flap. Acts as a genome stabilization factor that prevents flaps from equilibrating into structures that lead to duplications and deletions. Also possesses 5'-3' exonuclease activity on nicked or gapped double-stranded DNA, and exhibits RNase H activity. Also involved in replication and repair of rDNA and in repairing mitochondrial DNA. This Plasmodium knowlesi (strain H) protein is Flap endonuclease 1.